Reading from the N-terminus, the 115-residue chain is Androgen-binding protein homolog (115 aa).

Positions Met-1–Ala-23 are cleaved as a signal peptide.

The protein belongs to the secretoglobin family.

The protein localises to the secreted. The sequence is that of Androgen-binding protein homolog from Mesocricetus auratus (Golden hamster).